Consider the following 788-residue polypeptide: MSTTGHRAGVFKKPAKPHKSWKGKRTKGEITTENRGREGVKQLTRSAHSTHRAVSKDARRNQLKMARDRKMADAMERRRTSNAPCLVTILSLGVGARPSEFLKKLATCDETIVQTHSPSTIDFAIPRFKSRISFLTPDKENVDSVLDAIRASDVLCFLWPLSAELSEWDEQLLTICKAAGLPTIVSVVPGLGGIQNHKKKEDVRKGIEFTISKWSMSNAGVMPADSVTDNLQLLRTLNETKKKPLTLQARHSYMLVENLEATESPEDSSKITLKAQGYLRGPEWNANNLIHLPGFGDFQISKIETAADPHPLKTSPPKGAEVIAKADEKRQSLETEITLDAMDGEQTWPTQEELEEADKEMRRVPKGTSSYQAAWILDDSEDDEDEEDEDEDMDDEEEDKDLEEDDEEEDTPMDLKSEAGETTASEMMFHDEIDEDINLAEVEKYRKERENAQWPDEVDTPIDQPARIRFQKYRGLKSFRTSTWDAKENLPVDYARIFQFANYKNTKKNVMSKIGGNDVDAGDAVIDKKFNGVFASVYIENVPVSVMEAYKETKNLVLFQLLPHEQKMSILNMVLKKHPSCTVPIGSEDQKFIFYVGFRQFEAHAVLSSNTPGDKFKLERFMPTEKTFVATVYAPITFNPATVLCFRQDDKGRQELVATGSVLDTNPDRIVLKRTVLSGHPYKINRRAVVVRYMFFNREDIDWFKPVELYTPSGRRGHIKEAVGTHGHMKCRFDQQLNAQDSVMLNLYKRVFPVWDYSLFNRNLNPSRFVERSRVESISLVQEDAMEE.

The interval 1-40 is disordered; sequence MSTTGHRAGVFKKPAKPHKSWKGKRTKGEITTENRGREGV. Basic residues predominate over residues 9-25; that stretch reads GVFKKPAKPHKSWKGKR. The span at 26-40 shows a compositional bias: basic and acidic residues; sequence TKGEITTENRGREGV. The 161-residue stretch at 83–243 folds into the Bms1-type G domain; the sequence is APCLVTILSL…LRTLNETKKK (161 aa). The tract at residues 354 to 433 is disordered; that stretch reads LEEADKEMRR…ASEMMFHDEI (80 aa). Positions 378–412 are enriched in acidic residues; it reads DDSEDDEDEEDEDEDMDDEEEDKDLEEDDEEEDTP.

It belongs to the TRAFAC class translation factor GTPase superfamily. Bms1-like GTPase family. TSR1 subfamily.

The protein localises to the nucleus. Its subcellular location is the nucleolus. Required during maturation of the 40S ribosomal subunit in the nucleolus. This chain is Pre-rRNA-processing protein TSR1 homolog, found in Caenorhabditis briggsae.